The primary structure comprises 183 residues: Lipocalin (183 aa).

A signal peptide spans 1-20 (MKGLVLSFALVALSALCVYG). An intrachain disulfide couples Cys83 to Cys179.

Belongs to the calycin superfamily. Lipocalin family. As to quaternary structure, monomer. Expressed mainly in choroid plexus. Much lower expression in other brain areas, and absent from liver.

The protein localises to the secreted. Its function is as follows. Might have a transport function across the blood brain barrier. Is supposed to have similar functions as a transthyretin which must have evolved after the stage of the amphibians in evolution. The protein is Lipocalin of Rhinella marina (Cane toad).